We begin with the raw amino-acid sequence, 271 residues long: Putative hydro-lyase Mrad2831_3350 (271 aa).

This sequence belongs to the D-glutamate cyclase family.

The sequence is that of Putative hydro-lyase Mrad2831_3350 from Methylobacterium radiotolerans (strain ATCC 27329 / DSM 1819 / JCM 2831 / NBRC 15690 / NCIMB 10815 / 0-1).